The chain runs to 453 residues: MFLLQRFFIYGLFLACFYTTVFGEKHFEAEEYRDSFLSQENMNKINHTTIERLFREMTENDPSLLSSSKTLAELSKGELAKAREDLKSVLSFLKNNLPVDTESSSEAFTIEKDNNSCVWLNSVKSFVEKQFSYSSGTNGILATFLTAIPPNIFILLVPKSFDTSMLNLFVAVSAGSLLGDVFLQLLPTVYSTNGGDFPASSVYSILIGALVFFLMDKGIRILIHERPSSLSKPKKDGEETSSVNKPSASSTQTDVKGVEGLRKRNVKDDQNSKGHEPDLIRHVVEEVSEEYNDKTVVYLNLLCDSFHNFMDGLAITSAFFTNTSIGISTTFAVLLHEIPAEIGDLAILLRNGYTKSQVLVLQMITMVTGLLGAIVATYIYTASSSSSPYGSFLLQLEDKLLPFTAGGFLYIAYLGVFPELLEINLSKGKLGNMIYTALYMMFIVGGFSFLYYV.

The signal sequence occupies residues 1–23 (MFLLQRFFIYGLFLACFYTTVFG). Over 24 to 137 (EKHFEAEEYR…EKQFSYSSGT (114 aa)) the chain is Lumenal. Residues 138–158 (NGILATFLTAIPPNIFILLVP) form a helical membrane-spanning segment. The Cytoplasmic portion of the chain corresponds to 159 to 165 (KSFDTSM). A helical membrane pass occupies residues 166–186 (LNLFVAVSAGSLLGDVFLQLL). Over 187-194 (PTVYSTNG) the chain is Lumenal. The chain crosses the membrane as a helical span at residues 195–215 (GDFPASSVYSILIGALVFFLM). Residues 216–358 (DKGIRILIHE…LRNGYTKSQV (143 aa)) lie on the Cytoplasmic side of the membrane. Residues 229 to 238 (SLSKPKKDGE) are compositionally biased toward basic and acidic residues. The segment at 229 to 278 (SLSKPKKDGEETSSVNKPSASSTQTDVKGVEGLRKRNVKDDQNSKGHEPD) is disordered. A compositionally biased stretch (polar residues) spans 240 to 254 (TSSVNKPSASSTQTD). Basic and acidic residues predominate over residues 256-278 (KGVEGLRKRNVKDDQNSKGHEPD). A helical transmembrane segment spans residues 359-379 (LVLQMITMVTGLLGAIVATYI). Residues 380–399 (YTASSSSSPYGSFLLQLEDK) lie on the Lumenal side of the membrane. A helical transmembrane segment spans residues 400-420 (LLPFTAGGFLYIAYLGVFPEL). Topologically, residues 421 to 432 (LEINLSKGKLGN) are cytoplasmic. The chain crosses the membrane as a helical span at residues 433 to 453 (MIYTALYMMFIVGGFSFLYYV).

It belongs to the ZIP transporter (TC 2.A.5) family. KE4/Catsup subfamily.

The protein localises to the endoplasmic reticulum membrane. This is an uncharacterized protein from Schizosaccharomyces pombe (strain 972 / ATCC 24843) (Fission yeast).